Reading from the N-terminus, the 191-residue chain is Holliday junction branch migration complex subunit RuvA (191 aa).

The segment at 1–64 (MIGSITGNVE…DNITQLYGFL (64 aa)) is domain I. A domain II region spans residues 65 to 142 (NRQEQDYLKM…KMPIEETFSI (78 aa)). The segment at 143–146 (IEND) is flexible linker. Positions 146-191 (DDSLAALISLGYEKLKAFNVIQEIKSKTPDASTQEVIRKALQKLSQ) are domain III.

Belongs to the RuvA family. In terms of assembly, homotetramer. Forms an RuvA(8)-RuvB(12)-Holliday junction (HJ) complex. HJ DNA is sandwiched between 2 RuvA tetramers; dsDNA enters through RuvA and exits via RuvB. An RuvB hexamer assembles on each DNA strand where it exits the tetramer. Each RuvB hexamer is contacted by two RuvA subunits (via domain III) on 2 adjacent RuvB subunits; this complex drives branch migration. In the full resolvosome a probable DNA-RuvA(4)-RuvB(12)-RuvC(2) complex forms which resolves the HJ.

Its subcellular location is the cytoplasm. The RuvA-RuvB-RuvC complex processes Holliday junction (HJ) DNA during genetic recombination and DNA repair, while the RuvA-RuvB complex plays an important role in the rescue of blocked DNA replication forks via replication fork reversal (RFR). RuvA specifically binds to HJ cruciform DNA, conferring on it an open structure. The RuvB hexamer acts as an ATP-dependent pump, pulling dsDNA into and through the RuvAB complex. HJ branch migration allows RuvC to scan DNA until it finds its consensus sequence, where it cleaves and resolves the cruciform DNA. This Ehrlichia ruminantium (strain Welgevonden) protein is Holliday junction branch migration complex subunit RuvA.